The following is a 190-amino-acid chain: Glutathione peroxidase 2 (190 aa).

The active site involves U40. A non-standard amino acid (selenocysteine) is located at residue U40.

The protein belongs to the glutathione peroxidase family. In terms of assembly, homotetramer. Mostly in liver and gastrointestinal tract, not found in heart or kidney.

The protein resides in the cytoplasm. It localises to the cytosol. The enzyme catalyses 2 glutathione + H2O2 = glutathione disulfide + 2 H2O. It carries out the reaction a hydroperoxy polyunsaturated fatty acid + 2 glutathione = a hydroxy polyunsaturated fatty acid + glutathione disulfide + H2O. It catalyses the reaction tert-butyl hydroperoxide + 2 glutathione = tert-butanol + glutathione disulfide + H2O. The catalysed reaction is cumene hydroperoxide + 2 glutathione = 2-phenylpropan-2-ol + glutathione disulfide + H2O. The enzyme catalyses (13S)-hydroperoxy-(9Z,11E)-octadecadienoate + 2 glutathione = (13S)-hydroxy-(9Z,11E)-octadecadienoate + glutathione disulfide + H2O. It carries out the reaction (5S)-hydroperoxy-(6E,8Z,11Z,14Z)-eicosatetraenoate + 2 glutathione = (5S)-hydroxy-(6E,8Z,11Z,14Z)-eicosatetraenoate + glutathione disulfide + H2O. It catalyses the reaction (12R)-hydroperoxy-(5Z,8Z,10E,14Z)-eicosatetraenoate + 2 glutathione = (12R)-hydroxy-(5Z,8Z,10E,14Z)-eicosatetraenoate + glutathione disulfide + H2O. The catalysed reaction is (15S)-hydroperoxy-(5Z,8Z,11Z,13E)-eicosatetraenoate + 2 glutathione = (15S)-hydroxy-(5Z,8Z,11Z,13E)-eicosatetraenoate + glutathione disulfide + H2O. Its function is as follows. Catalyzes the reduction of hydroperoxides in a glutathione-dependent manner thus regulating cellular redox homeostasis. Can reduce small soluble hydroperoxides such as H2O2, cumene hydroperoxide and tert-butyl hydroperoxide, as well as several fatty acid-derived hydroperoxides. Cannot reduce phosphatidycholine hydroperoxide. This chain is Glutathione peroxidase 2, found in Homo sapiens (Human).